Reading from the N-terminus, the 117-residue chain is MQKSCDENEGTPQNTPKADEGHPSEDPPQQAGETLQASGENVREETEGSHRGEPAEPSPEPKEDTPARHLNPEEVIRGVDELERLREEIRRVRNKFVLMHWKQRHSRSRPYPVCFRP.

The tract at residues 1-82 (MQKSCDENEG…EEVIRGVDEL (82 aa)) is disordered. Residues 41-82 (NVREETEGSHRGEPAEPSPEPKEDTPARHLNPEEVIRGVDEL) are compositionally biased toward basic and acidic residues. Residues 73–100 (EEVIRGVDELERLREEIRRVRNKFVLMH) adopt a coiled-coil conformation.

The protein belongs to the TFS-II family. TFA subfamily.

The protein localises to the nucleus. May be involved in transcriptional regulation. This is Transcription elongation factor A protein-like 8 (Tceal8) from Mus musculus (Mouse).